The chain runs to 199 residues: Probable V-type proton ATPase 20 kDa proteolipid subunit (199 aa).

Residues 1–3 (MSL) are Vacuolar-facing. A helical transmembrane segment spans residues 4 to 24 (FSTSLWTTTVMSIIVGLYMLF). The Cytoplasmic segment spans residues 25-46 (HNSGESFDFGSFLLDTSPYTWG). The chain crosses the membrane as a helical span at residues 47 to 67 (LLGIASCVAFGIIGAAWGIFI). Residues 68–86 (CGTSILGGAVKAPRIKTKN) are Vacuolar-facing. A helical transmembrane segment spans residues 87–107 (LISIIFCEVVAIYSLIIAIVF). Topologically, residues 108–130 (SAKINDINPAGFYTKSHYYTGFA) are cytoplasmic. Residues 131-151 (LFWGGITVGLCNLICGVCVGI) form a helical membrane-spanning segment. The Vacuolar segment spans residues 152–170 (TGSSAALADAQDASLFVKV). A helical transmembrane segment spans residues 171–191 (LVVEIFGSVLGLFGLIVGLLI). The Cytoplasmic segment spans residues 192–199 (GGKASDFS).

Belongs to the V-ATPase proteolipid subunit family. As to quaternary structure, V-ATPase is a heteromultimeric enzyme composed of a peripheral catalytic V1 complex (components A to H) attached to an integral membrane V0 proton pore complex (components: a, c, c', c'', d, e, f and VOA1). The decameric c-ring forms the proton-conducting pore, and is composed of eight proteolipid subunits c, one subunit c' and one subunit c''.

Its subcellular location is the vacuole membrane. Proton-conducting pore forming subunit of the V0 complex of vacuolar(H+)-ATPase (V-ATPase), a multisubunit enzyme composed of a peripheral complex (V1) that hydrolyzes ATP and a membrane integral complex (V0) that translocates protons. V-ATPase is responsible for acidifying and maintaining the pH of intracellular compartments. The protein is Probable V-type proton ATPase 20 kDa proteolipid subunit (vma16) of Schizosaccharomyces pombe (strain 972 / ATCC 24843) (Fission yeast).